We begin with the raw amino-acid sequence, 258 residues long: Transcription factor ORG3 (258 aa).

The bHLH domain maps to 76-128 (VKKLNHNASERDRRRKINSLFSSLRSCLPASGQSKKLSIPATVSRSLKYIPEL).

Homodimer. In terms of tissue distribution, expressed in vascular tissues. Detected in roots.

The protein localises to the nucleus. The sequence is that of Transcription factor ORG3 (ORG3) from Arabidopsis thaliana (Mouse-ear cress).